The sequence spans 185 residues: MAQQCFHSEYFDSLLHACKPCHLRCSNPPATCQPYCDPSVTSSVKGTYTVLWIFLGLTLVLSLALFTISFLLRKMNPEALKDEPQSPGQLDGSAQLDKADTELTRIRAGDDRIFPRSLEYTVEECTCEDCVKSKPKGDSDHFFPLPAMEEGATILVTTKTGDYGKSSVPTALQSVMGMEKPTHTR.

The Extracellular portion of the chain corresponds to 1–49; sequence MAQQCFHSEYFDSLLHACKPCHLRCSNPPATCQPYCDPSVTSSVKGTYT. One copy of the TNFR-Cys repeat lies at 4–36; the sequence is QCFHSEYFDSLLHACKPCHLRCSNPPATCQPYC. 3 cysteine pairs are disulfide-bonded: Cys5-Cys18, Cys21-Cys32, and Cys25-Cys36. Residues 50 to 70 form a helical; Signal-anchor for type III membrane protein membrane-spanning segment; it reads VLWIFLGLTLVLSLALFTISF. Over 71–185 the chain is Cytoplasmic; the sequence is LLRKMNPEAL…MGMEKPTHTR (115 aa).

As to quaternary structure, associates with TRAF1, TRAF2, TRAF3, TRAF5 and TRAF6. As to expression, detected in spleen, thymus, bone marrow and heart, and at lower levels in kidney and lung.

The protein resides in the membrane. Receptor for TNFSF13B/BLyS/BAFF and TNFSF13/APRIL. Promotes B-cell survival and plays a role in the regulation of humoral immunity. Activates NF-kappa-B and JNK. The polypeptide is Tumor necrosis factor receptor superfamily member 17 (Tnfrsf17) (Mus musculus (Mouse)).